The primary structure comprises 22 residues: Peroxidase 5 (22 aa).

Belongs to the peroxidase family. Classical plant (class III) peroxidase subfamily. Requires heme b as cofactor. Ca(2+) serves as cofactor.

The protein resides in the secreted. Its subcellular location is the cell wall. It catalyses the reaction 2 a phenolic donor + H2O2 = 2 a phenolic radical donor + 2 H2O. Its function is as follows. Removal of H(2)O(2), oxidation of toxic reductants, biosynthesis and degradation of lignin, suberization, auxin catabolism, response to environmental stresses such as wounding, pathogen attack and oxidative stress. These functions might be dependent on each isozyme/isoform in each plant tissue. This is Peroxidase 5 from Cycas revoluta (Sago palm).